The following is a 418-amino-acid chain: Pyruvate decarboxylase 1 (418 aa).

Histidine 59 is a substrate binding site. Positions 337–418 (DSWFNCQKLK…IFLINNGGYT (82 aa)) are thiamine pyrophosphate binding. Mg(2+) contacts are provided by aspartate 387, asparagine 414, and glycine 416.

It belongs to the TPP enzyme family. As to quaternary structure, homotetramer. A metal cation is required as a cofactor. Thiamine diphosphate serves as cofactor. In terms of tissue distribution, leaves.

The catalysed reaction is a 2-oxocarboxylate + H(+) = an aldehyde + CO2. This is Pyruvate decarboxylase 1 (PDC1) from Nicotiana tabacum (Common tobacco).